The chain runs to 850 residues: MIRRLLIPNAAAKSHQYIKVSLFSTSAPEITPPFIHKCKTISQVKLIHQKLLSFGILTLNLTSHLISTYISVGCLSHAVSLLRRFPPSDAGVYHWNSLIRSYGDNGCANKCLYLFGLMHSLSWTPDNYTFPFVFKACGEISSVRCGESAHALSLVTGFISNVFVGNALVAMYSRCRSLSDARKVFDEMSVWDVVSWNSIIESYAKLGKPKVALEMFSRMTNEFGCRPDNITLVNVLPPCASLGTHSLGKQLHCFAVTSEMIQNMFVGNCLVDMYAKCGMMDEANTVFSNMSVKDVVSWNAMVAGYSQIGRFEDAVRLFEKMQEEKIKMDVVTWSAAISGYAQRGLGYEALGVCRQMLSSGIKPNEVTLISVLSGCASVGALMHGKEIHCYAIKYPIDLRKNGHGDENMVINQLIDMYAKCKKVDTARAMFDSLSPKERDVVTWTVMIGGYSQHGDANKALELLSEMFEEDCQTRPNAFTISCALVACASLAALRIGKQIHAYALRNQQNAVPLFVSNCLIDMYAKCGSISDARLVFDNMMAKNEVTWTSLMTGYGMHGYGEEALGIFDEMRRIGFKLDGVTLLVVLYACSHSGMIDQGMEYFNRMKTVFGVSPGPEHYACLVDLLGRAGRLNAALRLIEEMPMEPPPVVWVAFLSCCRIHGKVELGEYAAEKITELASNHDGSYTLLSNLYANAGRWKDVTRIRSLMRHKGVKKRPGCSWVEGIKGTTTFFVGDKTHPHAKEIYQVLLDHMQRIKDIGYVPETGFALHDVDDEEKDDLLFEHSEKLALAYGILTTPQGAAIRITKNLRVCGDCHTAFTYMSRIIDHDIILRDSSRFHHFKNGSCSCKGYW.

PPR repeat units lie at residues 58-88 (TLNL…FPPS), 91-125 (GVYH…SWTP), 126-160 (DNYT…GFIS), 161-191 (NVFV…MSVW), 192-227 (DVVS…GCRP), 228-262 (DNIT…EMIQ), 263-293 (NMFV…MSVK), 294-328 (DVVS…KIKM), 329-363 (DVVT…GIKP), 364-398 (NEVT…PIDL), 406-436 (ENMV…LSPK), 439-473 (DVVT…DCQT), 476-510 (NAFT…QQNA), 512-542 (PLFV…MMAK), 543-577 (NEVT…GFKL), 578-608 (DGVT…MKTV), and 614-644 (GPEH…MPME). The interval 649–724 (VWVAFLSCCR…RPGCSWVEGI (76 aa)) is type E motif. Residues 725–755 (KGTTTFFVGDKTHPHAKEIYQVLLDHMQRIK) form a type E(+) motif region. The segment at 756-850 (DIGYVPETGF…NGSCSCKGYW (95 aa)) is type DYW motif.

It belongs to the PPR family. PCMP-H subfamily.

In Arabidopsis thaliana (Mouse-ear cress), this protein is Pentatricopeptide repeat-containing protein At5g16860 (PCMP-H92).